Consider the following 145-residue polypeptide: Transcription antitermination protein NusB (145 aa).

This sequence belongs to the NusB family.

Involved in transcription antitermination. Required for transcription of ribosomal RNA (rRNA) genes. Binds specifically to the boxA antiterminator sequence of the ribosomal RNA (rrn) operons. The sequence is that of Transcription antitermination protein NusB from Acidothermus cellulolyticus (strain ATCC 43068 / DSM 8971 / 11B).